The primary structure comprises 182 residues: Adenine phosphoribosyltransferase (182 aa).

Belongs to the purine/pyrimidine phosphoribosyltransferase family. As to quaternary structure, homodimer.

It localises to the cytoplasm. It carries out the reaction AMP + diphosphate = 5-phospho-alpha-D-ribose 1-diphosphate + adenine. It participates in purine metabolism; AMP biosynthesis via salvage pathway; AMP from adenine: step 1/1. Functionally, catalyzes a salvage reaction resulting in the formation of AMP, that is energically less costly than de novo synthesis. The sequence is that of Adenine phosphoribosyltransferase from Pseudomonas aeruginosa (strain LESB58).